The chain runs to 205 residues: Pyrrolidone-carboxylate peptidase (205 aa).

Active-site residues include Glu-78, Cys-141, and His-165.

The protein belongs to the peptidase C15 family. Homotetramer.

Its subcellular location is the cytoplasm. The enzyme catalyses Release of an N-terminal pyroglutamyl group from a polypeptide, the second amino acid generally not being Pro.. Functionally, removes 5-oxoproline from various penultimate amino acid residues except L-proline. This Thermosipho africanus (strain TCF52B) protein is Pyrrolidone-carboxylate peptidase.